Here is a 254-residue protein sequence, read N- to C-terminus: Decaprenylphosphoryl-2-keto-beta-D-erythro-pentose reductase (254 aa).

An NAD(+)-binding site is contributed by Asp-67. Tyr-160 functions as the Proton acceptor in the catalytic mechanism. Lys-164 is a binding site for NAD(+).

It belongs to the short-chain dehydrogenases/reductases (SDR) family. As to quaternary structure, interacts with DprE1 to form an epimerase complex.

It localises to the periplasm. It catalyses the reaction trans,octa-cis-decaprenylphospho-beta-D-arabinofuranose + NAD(+) = trans,octa-cis-decaprenylphospho-beta-D-erythro-pentofuranosid-2-ulose + NADH + H(+). It functions in the pathway cell wall biogenesis; cell wall polysaccharide biosynthesis. Its function is as follows. Component of the DprE1-DprE2 complex that catalyzes the 2-step epimerization of decaprenyl-phospho-ribose (DPR) to decaprenyl-phospho-arabinose (DPA), a key precursor that serves as the arabinose donor required for the synthesis of cell-wall arabinans. DprE1 catalyzes the first step of epimerization, namely FAD-dependent oxidation of the C2' hydroxyl of DPR to yield the keto intermediate decaprenyl-phospho-2'-keto-D-arabinose (DPX). The intermediate DPX is then transferred to DprE2 subunit of the epimerase complex, most probably through a 'substrate channel' at the interface of DprE1-DprE2 complex. DprE2 then catalyzes the second step of epimerization, the NAD(+)-dependent reduction of DPX that leads to the formation of DPA. The protein is Decaprenylphosphoryl-2-keto-beta-D-erythro-pentose reductase of Mycobacterium bovis (strain ATCC BAA-935 / AF2122/97).